Here is a 241-residue protein sequence, read N- to C-terminus: Tetraspanin-1 (241 aa).

Residues 1 to 11 (MQCFSFIKTMM) are Cytoplasmic-facing. The chain crosses the membrane as a helical span at residues 12-32 (ILFNLLIFLCGAALLAVGIWV). At 33–52 (SIDGASFLKIFGPLSSSAMQ) the chain is on the extracellular side. The chain crosses the membrane as a helical span at residues 53–73 (FVNVGYFLIAAGVVVFALGFL). Over 74–88 (GCYGAKTESKCALVT) the chain is Cytoplasmic. Residues 89–109 (FFFILLLIFIAEVAAAVVALV) traverse the membrane as a helical segment. Over 110–211 (YTTMAEHFLT…NQLLYDIRTN (102 aa)) the chain is Extracellular. N141, N154, N178, and N184 each carry an N-linked (GlcNAc...) asparagine glycan. The chain crosses the membrane as a helical span at residues 212–232 (AVTVGGVAAGIGGLELAAMIV). At 233–241 (SMYLYCNLQ) the chain is on the cytoplasmic side.

Belongs to the tetraspanin (TM4SF) family. Interacts with SLC19A2. Interacts with NTRK1/TRKA.

The protein resides in the cell membrane. The protein localises to the lysosome membrane. Functionally, structural component of specialized membrane microdomains known as tetraspanin-enriched microdomains (TERMs), which act as platforms for receptor clustering and signaling. Participates thereby in diverse biological functions such as cell signal transduction, adhesion, migration and protein trafficking. Regulates neuronal differentiation in response to NGF by facilitating NGF-mediated activation of NTRK1/TRKA receptor tyrosine kinase and subsequent downstream signaling pathways. Plays a role in the inhibition of TNFalpha-induced apoptosis. Mechanistically, inhibits the NF-kappa-B signaling pathway by blocking phosphorylation of CHUK. Also promotes the stability of the thiamine transporter 1/SLC19A2 in intestinal epithelial cells leading to an increase of thiamine uptake process. The polypeptide is Tetraspanin-1 (TSPAN1) (Homo sapiens (Human)).